We begin with the raw amino-acid sequence, 61 residues long: Conotoxin TeAr154 (61 aa).

The signal sequence occupies residues 1–19; it reads MHCLPVFVILLLLTASGLS. The propeptide occupies 20–47; sequence VDARPKTEDDVPLSSFRDNTKSTLQRLL. Glu57 bears the 4-carboxyglutamate mark.

Post-translationally, contains 2 disulfide bonds that can be either 'C1-C3, C2-C4' or 'C1-C4, C2-C3', since these disulfide connectivities have been observed for conotoxins with cysteine framework V (for examples, see AC P0DQQ7 and AC P81755). In terms of processing, contains 2 disulfide bonds. As to expression, expressed by the venom duct.

It localises to the secreted. In Conus textile (Cloth-of-gold cone), this protein is Conotoxin TeAr154.